Here is a 271-residue protein sequence, read N- to C-terminus: uncharacterized protein (271 aa).

The next 3 membrane-spanning stretches (helical) occupy residues 30-50, 189-209, and 218-238; these read IWFP…GMLL, ALAA…YFLI, and FLVT…IFAC.

Its subcellular location is the cell membrane. This is an uncharacterized protein from Aquifex aeolicus (strain VF5).